The chain runs to 557 residues: Dihydroxy-acid dehydratase 1 (557 aa).

Residue cysteine 50 participates in [2Fe-2S] cluster binding. Residue aspartate 82 participates in Mg(2+) binding. Cysteine 123 provides a ligand contact to [2Fe-2S] cluster. Mg(2+) contacts are provided by aspartate 124 and lysine 125. Lysine 125 is subject to N6-carboxylysine. [2Fe-2S] cluster is bound at residue cysteine 195. Glutamate 447 is a Mg(2+) binding site. The active-site Proton acceptor is the serine 473.

It belongs to the IlvD/Edd family. In terms of assembly, homodimer. It depends on [2Fe-2S] cluster as a cofactor. Mg(2+) is required as a cofactor.

It carries out the reaction (2R)-2,3-dihydroxy-3-methylbutanoate = 3-methyl-2-oxobutanoate + H2O. It catalyses the reaction (2R,3R)-2,3-dihydroxy-3-methylpentanoate = (S)-3-methyl-2-oxopentanoate + H2O. The protein operates within amino-acid biosynthesis; L-isoleucine biosynthesis; L-isoleucine from 2-oxobutanoate: step 3/4. It participates in amino-acid biosynthesis; L-valine biosynthesis; L-valine from pyruvate: step 3/4. Functions in the biosynthesis of branched-chain amino acids. Catalyzes the dehydration of (2R,3R)-2,3-dihydroxy-3-methylpentanoate (2,3-dihydroxy-3-methylvalerate) into 2-oxo-3-methylpentanoate (2-oxo-3-methylvalerate) and of (2R)-2,3-dihydroxy-3-methylbutanoate (2,3-dihydroxyisovalerate) into 2-oxo-3-methylbutanoate (2-oxoisovalerate), the penultimate precursor to L-isoleucine and L-valine, respectively. This chain is Dihydroxy-acid dehydratase 1, found in Cupriavidus pinatubonensis (strain JMP 134 / LMG 1197) (Cupriavidus necator (strain JMP 134)).